Here is a 258-residue protein sequence, read N- to C-terminus: D-aminoacyl-tRNA deacylase (258 aa).

Belongs to the DtdA deacylase family. Monomer. The cofactor is Zn(2+).

It catalyses the reaction a D-aminoacyl-tRNA + H2O = a tRNA + a D-alpha-amino acid + H(+). It carries out the reaction glycyl-tRNA(Ala) + H2O = tRNA(Ala) + glycine + H(+). Functionally, D-aminoacyl-tRNA deacylase with broad substrate specificity. By recycling D-aminoacyl-tRNA to D-amino acids and free tRNA molecules, this enzyme counteracts the toxicity associated with the formation of D-aminoacyl-tRNA entities in vivo. This is D-aminoacyl-tRNA deacylase from Cenarchaeum symbiosum (strain A).